A 332-amino-acid chain; its full sequence is Methionine synthase (332 aa).

Zn(2+)-binding residues include His211, Cys213, and Cys296.

It belongs to the archaeal MetE family. Zn(2+) is required as a cofactor.

It functions in the pathway amino-acid biosynthesis; L-methionine biosynthesis via de novo pathway. Functionally, catalyzes the transfer of a methyl group to L-homocysteine resulting in methionine formation. The physiological methyl donor is unknown. In Saccharolobus islandicus (strain Y.N.15.51 / Yellowstone #2) (Sulfolobus islandicus), this protein is Methionine synthase.